Here is a 312-residue protein sequence, read N- to C-terminus: Zinc finger protein 414 (312 aa).

The disordered stretch occupies residues 1–110 (MEEKPSGPIP…RRPPPGKQIP (110 aa)). Over residues 29 to 48 (SPAVPAAAPSSSMSEEPGPE) the composition is skewed to low complexity. A compositionally biased stretch (polar residues) spans 84–93 (GLTSIVSGTS). 3 C2H2-type zinc fingers span residues 109–133 (IPCS…LRTH), 145–169 (FRCS…SKLH), and 176–201 (FKCE…CAEH). Positions 203-312 (QSPAPPPPPA…GSDAPSGACR (110 aa)) are disordered. Residues 213–225 (LDREPPAPERPPE) are compositionally biased toward basic and acidic residues. Composition is skewed to low complexity over residues 227–243 (DPAS…EPFT) and 265–285 (SPPR…SSAA).

It belongs to the krueppel C2H2-type zinc-finger protein family.

The protein localises to the nucleus. May be involved in transcriptional regulation. The protein is Zinc finger protein 414 (ZNF414) of Homo sapiens (Human).